A 585-amino-acid polypeptide reads, in one-letter code: Complement component C8 alpha chain (585 aa).

The N-terminal stretch at 1-20 (MLVAAFFTLFLVTCQPAVTA) is a signal peptide. Positions 21–30 (QEKVNQRVNR) are excised as a propeptide. The region spanning 38–91 (DCQLSSWSEWTDCFPCQDTKYRHRSLLQPNKFGGTICSGDIWDRASCYSPTACL) is the TSP type-1 1 domain. Disulfide bonds link cysteine 39–cysteine 74, cysteine 50–cysteine 84, cysteine 53–cysteine 90, cysteine 96–cysteine 108, cysteine 102–cysteine 121, cysteine 115–cysteine 130, and cysteine 140–cysteine 177. Tryptophan 44 carries a C-linked (Man) tryptophan glycan. The 39-residue stretch at 94–132 (AQCGQDFQCKETGRCLKRHLVCNGENDCLDGSDEDNCED) folds into the LDL-receptor class A domain. 6 residues coordinate Ca(2+): leucine 113, asparagine 116, glutamate 118, aspartate 120, aspartate 126, and glutamate 127. Residues 136–499 (TESDCAQYDP…QYLMEFNACR (364 aa)) form the MACPF domain. Transmembrane regions (beta stranded) follow at residues 248–256 (AGVTISAGL), 259–266 (SPLLGTVG), 377–384 (GGFGEIQY), and 391–396 (AQGILS). A disulfide bridge connects residues cysteine 375 and cysteine 400. Asparagine 438 is a glycosylation site (N-linked (GlcNAc...) asparagine). Disulfide bonds link cysteine 498/cysteine 545, cysteine 500/cysteine 516, cysteine 503/cysteine 518, and cysteine 520/cysteine 529. Residues 499 to 530 (RCGPCFNNGKPILEGTSCRCQCSLGLQGPACE) form the EGF-like domain. Residues 540 to 584 (DGHWSCWGSWSPCTAGTRERRRECNNPAPQNGGAPCPGWRVQTQA) enclose the TSP type-1 2 domain. Residues tryptophan 543, tryptophan 546, and tryptophan 549 are each glycosylated (C-linked (Man) tryptophan). Disulfide bonds link cysteine 552-cysteine 585 and cysteine 563-cysteine 575.

The protein belongs to the complement C6/C7/C8/C9 family. Heterotrimer of 3 chains: alpha (C8A), beta (C8B) and gamma (C8G); the alpha and gamma chains are disulfide bonded. Component of the membrane attack complex (MAC), composed of complement C5b, C6, C7, C8A, C8B, C8G and multiple copies of the pore-forming subunit C9.

It is found in the secreted. It localises to the target cell membrane. With respect to regulation, membrane attack complex (MAC) assembly is inhibited by CD59, thereby protecting self-cells from damage during complement activation. CD59 acts by binding to the beta-haipins of C8 (C8A and C8B), forming an intermolecular beta-sheet that prevents incorporation of the multiple copies of C9 required for complete formation of the osmolytic pore. MAC assembly is also inhibited by clusterin (CLU) chaperones that inhibit polymerization of C9. Its function is as follows. Component of the membrane attack complex (MAC), a multiprotein complex activated by the complement cascade, which inserts into a target cell membrane and forms a pore, leading to target cell membrane rupture and cell lysis. The MAC is initiated by proteolytic cleavage of C5 into complement C5b in response to the classical, alternative, lectin and GZMK complement pathways. The complement pathways consist in a cascade of proteins that leads to phagocytosis and breakdown of pathogens and signaling that strengthens the adaptive immune system. C8A, together with C8B and C8G, inserts into the target membrane, but does not form pores by itself. During MAC assembly, associates with C5b, C6 and C7 to form the C5b8 intermediate complex that inserts into the target membrane and traverses the bilayer increasing membrane rigidity. In Oryctolagus cuniculus (Rabbit), this protein is Complement component C8 alpha chain (C8A).